The primary structure comprises 161 residues: Nucleotide-binding protein RC1_3464 (161 aa).

The protein belongs to the YajQ family.

Nucleotide-binding protein. The sequence is that of Nucleotide-binding protein RC1_3464 from Rhodospirillum centenum (strain ATCC 51521 / SW).